Reading from the N-terminus, the 842-residue chain is Translation initiation factor IF-2 (842 aa).

2 disordered regions span residues 42-91 (ETKR…NLSS) and 139-253 (LQKQ…NQEP). 2 stretches are compositionally biased toward basic and acidic residues: residues 176–190 (IEKRKIDENQEEERH) and 199–214 (SEIRAPKIVKGADERR). Residues 340 to 509 (PRPPVVTIMG…LLQAEMLDLK (170 aa)) form the tr-type G domain. The tract at residues 349–356 (GHVDHGKT) is G1. A GTP-binding site is contributed by 349-356 (GHVDHGKT). Residues 374–378 (GITQH) are G2. The G3 stretch occupies residues 395 to 398 (DTPG). GTP contacts are provided by residues 395–399 (DTPGH) and 449–452 (NKID). The tract at residues 449 to 452 (NKID) is G4. The G5 stretch occupies residues 485–487 (SAK).

Belongs to the TRAFAC class translation factor GTPase superfamily. Classic translation factor GTPase family. IF-2 subfamily.

It localises to the cytoplasm. Functionally, one of the essential components for the initiation of protein synthesis. Protects formylmethionyl-tRNA from spontaneous hydrolysis and promotes its binding to the 30S ribosomal subunits. Also involved in the hydrolysis of GTP during the formation of the 70S ribosomal complex. This chain is Translation initiation factor IF-2, found in Bartonella tribocorum (strain CIP 105476 / IBS 506).